Here is a 152-residue protein sequence, read N- to C-terminus: UPF0266 membrane protein YobD (152 aa).

The Periplasmic portion of the chain corresponds to 1–5 (MTITD). Residues 6–26 (LVLILFIAALLAYALYDQFIM) form a helical membrane-spanning segment. At 27 to 44 (PRRNGPTLLSIALLRRGR) the chain is on the cytoplasmic side. Residues 45–65 (IDSVIFVGLVAILIYNNVTSH) traverse the membrane as a helical segment. A topological domain (periplasmic) is located at residue Gly66. The helical transmembrane segment at 67–87 (AQMTTWLLSALALMGFYIFWI) threads the bilayer. The Cytoplasmic portion of the chain corresponds to 88-152 (RTPRIIFKQR…KIYKLLIENQ (65 aa)).

Belongs to the UPF0266 family.

Its subcellular location is the cell inner membrane. This Salmonella typhi protein is UPF0266 membrane protein YobD (yobD).